A 197-amino-acid polypeptide reads, in one-letter code: FMN-dependent NADH:quinone oxidoreductase (197 aa).

Residues serine 10 and 17-19 (SFS) contribute to the FMN site.

The protein belongs to the azoreductase type 1 family. Homodimer. It depends on FMN as a cofactor.

The enzyme catalyses 2 a quinone + NADH + H(+) = 2 a 1,4-benzosemiquinone + NAD(+). It catalyses the reaction N,N-dimethyl-1,4-phenylenediamine + anthranilate + 2 NAD(+) = 2-(4-dimethylaminophenyl)diazenylbenzoate + 2 NADH + 2 H(+). Its function is as follows. Quinone reductase that provides resistance to thiol-specific stress caused by electrophilic quinones. In terms of biological role, also exhibits azoreductase activity. Catalyzes the reductive cleavage of the azo bond in aromatic azo compounds to the corresponding amines. The chain is FMN-dependent NADH:quinone oxidoreductase from Mycoplasmoides gallisepticum (strain R(low / passage 15 / clone 2)) (Mycoplasma gallisepticum).